The sequence spans 130 residues: Small ribosomal subunit protein uS9 (130 aa).

This sequence belongs to the universal ribosomal protein uS9 family.

This is Small ribosomal subunit protein uS9 from Aliivibrio salmonicida (strain LFI1238) (Vibrio salmonicida (strain LFI1238)).